A 392-amino-acid chain; its full sequence is Phosphoprotein (392 aa).

2 disordered regions span residues 61–107 (ESTN…GLDS) and 152–182 (PIATSSPIDFKRGAGIPAGSIEGSTQSDGWE). Positions 217–280 (LNVNEILNTV…ITTVKIMDPG (64 aa)) are multimerization. A coiled-coil region spans residues 219–246 (VNEILNTVRNLDSRMNQLETKVDRILSS).

This sequence belongs to the rubulavirus/avulavirus P protein family. Homotetramer. Interacts (via multimerization domain) with polymerase L; this interaction forms the polymerase L-P complex. Interacts (via N-terminus) with N0 (via Ncore); this interaction allows P to chaperon N0 to avoid N polymerization before encapsidation. Interacts (via C-terminus) with N-RNA template; this interaction positions the polymerase on the template for both transcription and replication.

Functionally, essential cofactor of the RNA polymerase L that plays a central role in the transcription and replication by forming the polymerase complex with RNA polymerase L and recruiting L to the genomic N-RNA template for RNA synthesis. Also plays a central role in the encapsidation of nascent RNA chains by forming the encapsidation complex with the nucleocapsid protein N (N-P complex). Acts as a chaperone for newly synthesized free N protein, so-called N0, allowing encapsidation of nascent RNA chains during replication. The nucleoprotein protein N prevents excessive phosphorylation of P, which leads to down-regulation of viral transcription/ replication. Participates, together with N, in the formation of viral factories (viroplasms), which are large inclusions in the host cytoplasm where replication takes place. The protein is Phosphoprotein (P/V) of Canis lupus familiaris (Dog).